We begin with the raw amino-acid sequence, 135 residues long: Transcriptional activator protein (135 aa).

Residues 17–32 (KVQHKIAKKKPIRRKR) carry the Nuclear localization signal motif. A zinc finger lies at 37-54 (CGCSYYLHLNCNNHGFTH). 2 stretches are compositionally biased toward polar residues: residues 77-87 (LFQDNRTQPEA) and 101-115 (IQPQHQEGNGDSQMF). The disordered stretch occupies residues 77–117 (LFQDNRTQPEAISNEPRHHFHSDKIQPQHQEGNGDSQMFSR). The transactivation stretch occupies residues 120 to 135 (NLDDITASDWSFLKSI).

This sequence belongs to the geminiviridae transcriptional activator protein family. As to quaternary structure, monomer. Homodimer. Homooligomer. Self-interaction correlates with nuclear localization and efficient activation of transcription. Monomers suppress local silencing by interacting with and inactivating host adenosine kinase 2 (ADK2) in the cytoplasm. Interacts with and inhibits host SNF1 kinase. Binds to ssDNA. May interact with host RPS27A. Post-translationally, phosphorylated.

Its subcellular location is the host nucleus. The protein resides in the host cytoplasm. Its function is as follows. Multifunctional protein that modulates host antiviral defenses and promotes host attractiveness to insect vectors. Acts as a suppressor of RNA-mediated gene silencing, also known as post-transcriptional gene silencing (PTGS), a mechanism of plant viral defense that limits the accumulation of viral RNAs. TrAP suppresses the host RNA silencing by inhibiting adenosine kinase 2 (ADK2), a kinase involved in a general methylation pathway. Also suppresses the host basal defense by interacting with and inhibiting SNF1 kinase, a key regulator of cell metabolism implicated in innate antiviral defense. Functionally, inhibits signal transduction by the phytohormone jasmonate, making the infected plant more attractive to aphids, which are the second host to play a role as a dissemination vector. Acts by binding to ubiquitin precursor RPS27A, thereby preventing ubiquitin degradation of JAZ. The polypeptide is Transcriptional activator protein (Tomato yellow leaf curl virus (strain Israel) (TYLCV)).